Reading from the N-terminus, the 202-residue chain is Glycerol-3-phosphate acyltransferase (202 aa).

Helical transmembrane passes span 2-22 (MIIV…GFVI), 54-74 (FLVT…PLWL), 85-105 (FFTN…YPVY), 120-140 (VVLG…FIIL), 141-161 (KIFK…VIGS), and 162-182 (LIIQ…ILII).

This sequence belongs to the PlsY family. As to quaternary structure, probably interacts with PlsX.

The protein localises to the cell membrane. It catalyses the reaction an acyl phosphate + sn-glycerol 3-phosphate = a 1-acyl-sn-glycero-3-phosphate + phosphate. It functions in the pathway lipid metabolism; phospholipid metabolism. Functionally, catalyzes the transfer of an acyl group from acyl-phosphate (acyl-PO(4)) to glycerol-3-phosphate (G3P) to form lysophosphatidic acid (LPA). This enzyme utilizes acyl-phosphate as fatty acyl donor, but not acyl-CoA or acyl-ACP. The sequence is that of Glycerol-3-phosphate acyltransferase from Staphylococcus aureus (strain bovine RF122 / ET3-1).